The primary structure comprises 623 residues: Glucokinase regulatory protein (623 aa).

2 consecutive SIS domains span residues 90–286 (VQEV…QGVV) and 320–476 (VGIS…VQKF). Residues 109 to 110 (TS), glutamate 153, and 179 to 181 (SVG) each bind beta-D-fructose 1-phosphate. A beta-D-fructose 6-phosphate-binding site is contributed by 109-110 (TS). 179 to 181 (SVG) provides a ligand contact to beta-D-fructose 6-phosphate. The interval 199–200 (AV) is important for interaction with GCK. Residue glutamate 348 participates in beta-D-fructose 1-phosphate binding. The segment at 463–465 (LLF) is essential for interaction with GCK.

Belongs to the GCKR family. As to quaternary structure, interacts (fructose 6-phosphate bound form) with GCK.

It localises to the cytoplasm. Its subcellular location is the nucleus. The protein resides in the mitochondrion. In terms of biological role, regulates glucokinase (GCK) by forming an inactive complex with this enzyme. Acts by promoting GCK recruitment to the nucleus, possibly to provide a reserve of GCK that can be quickly released in the cytoplasm after a meal. The affinity of GCKR for GCK is modulated by fructose metabolites: GCKR with bound fructose 6-phosphate has increased affinity for GCK, while GCKR with bound fructose 1-phosphate has strongly decreased affinity for GCK and does not inhibit GCK activity. This chain is Glucokinase regulatory protein, found in Mus musculus (Mouse).